Here is a 427-residue protein sequence, read N- to C-terminus: 3-phosphoshikimate 1-carboxyvinyltransferase (427 aa).

3-phosphoshikimate-binding residues include lysine 22, serine 23, and arginine 27. Lysine 22 lines the phosphoenolpyruvate pocket. Phosphoenolpyruvate is bound by residues glycine 96 and arginine 124. 7 residues coordinate 3-phosphoshikimate: serine 169, serine 170, glutamine 171, serine 197, aspartate 313, asparagine 336, and lysine 340. Glutamine 171 contacts phosphoenolpyruvate. Aspartate 313 serves as the catalytic Proton acceptor. Positions 344, 386, and 411 each coordinate phosphoenolpyruvate.

It belongs to the EPSP synthase family. In terms of assembly, monomer.

Its subcellular location is the cytoplasm. The catalysed reaction is 3-phosphoshikimate + phosphoenolpyruvate = 5-O-(1-carboxyvinyl)-3-phosphoshikimate + phosphate. It participates in metabolic intermediate biosynthesis; chorismate biosynthesis; chorismate from D-erythrose 4-phosphate and phosphoenolpyruvate: step 6/7. Functionally, catalyzes the transfer of the enolpyruvyl moiety of phosphoenolpyruvate (PEP) to the 5-hydroxyl of shikimate-3-phosphate (S3P) to produce enolpyruvyl shikimate-3-phosphate and inorganic phosphate. This chain is 3-phosphoshikimate 1-carboxyvinyltransferase, found in Shigella dysenteriae.